The primary structure comprises 233 residues: Large ribosomal subunit protein eL6x (233 aa).

Residues 48–72 are compositionally biased toward basic and acidic residues; that stretch reads HDAKSKVDAPVEKPPKFYPAEDVKK. The tract at residues 48–80 is disordered; it reads HDAKSKVDAPVEKPPKFYPAEDVKKPLPNRRTA.

The protein belongs to the eukaryotic ribosomal protein eL6 family.

This is Large ribosomal subunit protein eL6x (RPL6C) from Arabidopsis thaliana (Mouse-ear cress).